A 246-amino-acid polypeptide reads, in one-letter code: U11/U12 small nuclear ribonucleoprotein 35 kDa protein (246 aa).

One can recognise an RRM domain in the interval 51–129; that stretch reads LTLFVARLNL…HEIFVDYELE (79 aa). Lys172 is covalently cross-linked (Glycyl lysine isopeptide (Lys-Gly) (interchain with G-Cter in SUMO2)). The tract at residues 187-217 is disordered; it reads SRSRERHWDSRTRDRDHDRGREKRWQEREPT. The segment covering 192-217 has biased composition (basic and acidic residues); it reads RHWDSRTRDRDHDRGREKRWQEREPT.

Component of the U11/U12 snRNPs that are part of the U12-type spliceosome. In terms of tissue distribution, expressed in heart, liver, skeletal muscle and pancreas.

Its subcellular location is the nucleus. The polypeptide is U11/U12 small nuclear ribonucleoprotein 35 kDa protein (SNRNP35) (Homo sapiens (Human)).